The following is a 372-amino-acid chain: Glutamate 5-kinase (372 aa).

Lys14 serves as a coordination point for ATP. Residues Ser54, Asp141, and Asn153 each contribute to the substrate site. Residue Thr173–Asp174 participates in ATP binding. The PUA domain occupies Arg280–Met358.

Belongs to the glutamate 5-kinase family.

The protein resides in the cytoplasm. It catalyses the reaction L-glutamate + ATP = L-glutamyl 5-phosphate + ADP. It functions in the pathway amino-acid biosynthesis; L-proline biosynthesis; L-glutamate 5-semialdehyde from L-glutamate: step 1/2. Its function is as follows. Catalyzes the transfer of a phosphate group to glutamate to form L-glutamate 5-phosphate. This is Glutamate 5-kinase from Pseudomonas fluorescens (strain ATCC BAA-477 / NRRL B-23932 / Pf-5).